Here is a 448-residue protein sequence, read N- to C-terminus: tRNA modification GTPase MnmE (448 aa).

(6S)-5-formyl-5,6,7,8-tetrahydrofolate-binding residues include Arg-21, Glu-80, and Lys-119. The TrmE-type G domain maps to 215–370; it reads GVKLAIVGRP…LSEEILKKVG (156 aa). Asn-225 serves as a coordination point for K(+). GTP contacts are provided by residues 225 to 230, 244 to 250, and 269 to 272; these read NVGKSS, TDIAGTT, and DTAG. Ser-229 lines the Mg(2+) pocket. Positions 244, 246, and 249 each coordinate K(+). Thr-250 is a Mg(2+) binding site. (6S)-5-formyl-5,6,7,8-tetrahydrofolate is bound at residue Lys-448.

It belongs to the TRAFAC class TrmE-Era-EngA-EngB-Septin-like GTPase superfamily. TrmE GTPase family. Homodimer. Heterotetramer of two MnmE and two MnmG subunits. K(+) serves as cofactor.

The protein resides in the cytoplasm. Functionally, exhibits a very high intrinsic GTPase hydrolysis rate. Involved in the addition of a carboxymethylaminomethyl (cmnm) group at the wobble position (U34) of certain tRNAs, forming tRNA-cmnm(5)s(2)U34. The chain is tRNA modification GTPase MnmE from Aquifex aeolicus (strain VF5).